The primary structure comprises 448 residues: Exoglucanase GH7B (448 aa).

The N-terminal stretch at 1 to 17 (MSLAVVFLLGFLAVSHG) is a signal peptide. Q18 is modified (pyrrolidone carboxylic acid). 2 disulfides stabilise this stretch: C62/C83 and C73/C79. Substrate contacts are provided by residues Y97, 119-120 (DI), and K197. 6 disulfides stabilise this stretch: C154–C415, C188–C226, C192–C225, C246–C271, C254–C259, and C276–C350. E228 (nucleophile) is an active-site residue. Residues 230–233 (DIWE) and H244 each bind substrate. E233 acts as the Proton donor/acceptor in catalysis. 2 residues coordinate substrate: R266 and D274. Substrate-binding residues include W396 and R412.

It belongs to the glycosyl hydrolase 7 (cellulase C) family. Monomer. Highly expressed in the hepatopancreas (at protein level). Little or no expression detected in the hindgut or the rest of the body (at protein level).

It is found in the secreted. It carries out the reaction Hydrolysis of (1-&gt;4)-beta-D-glucosidic linkages in cellulose and cellotetraose, releasing cellobiose from the non-reducing ends of the chains.. In terms of biological role, exocellobiohydrolase (CBH) that catalyzes the hydrolysis of 1,4-beta-D-glucosidic bonds in cellulose to release the disaccharide cellobiose. The degradation of cellulose involves an interplay between different cellulolytic enzymes. Hydrolysis starts with endoglucanases (EGs), which cut internal beta-1,4-glucosidic bonds in cellulose to reduce the polymerization degree of the substrate and create new chain ends for exocellobiohydrolases (CBHs). The CBHs release the disaccharide cellobiose from the non-reducing end of the cellulose polymer chain. Finally, beta-1,4-glucosidases hydrolyze the cellobiose and other short cello-oligosaccharides into glucose units. The polypeptide is Exoglucanase GH7B (Limnoria quadripunctata (Gribble)).